We begin with the raw amino-acid sequence, 487 residues long: Argininosuccinate lyase (487 aa).

This sequence belongs to the lyase 1 family. Argininosuccinate lyase subfamily.

It is found in the cytoplasm. The catalysed reaction is 2-(N(omega)-L-arginino)succinate = fumarate + L-arginine. The protein operates within amino-acid biosynthesis; L-arginine biosynthesis; L-arginine from L-ornithine and carbamoyl phosphate: step 3/3. The protein is Argininosuccinate lyase of Methanococcus aeolicus (strain ATCC BAA-1280 / DSM 17508 / OCM 812 / Nankai-3).